The sequence spans 371 residues: Probable diguanylate cyclase DgcC (371 aa).

Helical transmembrane passes span 46 to 66 (AVGL…HPPP), 68 to 88 (WWWL…WQIA), 112 to 132 (WVGV…IMCL), 143 to 163 (FVAG…LTGI), and 171 to 191 (PLEW…FGWV). The 132-residue stretch at 240–371 (RDATLLIIDI…AGRNRTEVAA (132 aa)) folds into the GGDEF domain. Mg(2+)-binding residues include Asp-248 and Ile-249. Residues Asn-256 and Asp-265 each contribute to the substrate site. A Mg(2+)-binding site is contributed by Asp-291.

It depends on Mg(2+) as a cofactor.

The protein localises to the cell inner membrane. The enzyme catalyses 2 GTP = 3',3'-c-di-GMP + 2 diphosphate. It functions in the pathway purine metabolism; 3',5'-cyclic di-GMP biosynthesis. In terms of biological role, a probable diguanylate cyclase. The last member of a cascade of expressed proteins, its expression requires DgcM. DgcC production induces biosynthesis of cellulose in some E.coli isolates, but not in K12 strains. Cyclic-di-GMP is a second messenger which controls cell surface-associated traits in bacteria. The sequence is that of Probable diguanylate cyclase DgcC from Escherichia coli (strain K12).